The following is a 280-amino-acid chain: Large ribosomal subunit protein uL2 (280 aa).

2 disordered regions span residues 1–47 and 224–280; these read MAIR…NVHG and VVMN…SKKR. A compositionally biased stretch (basic and acidic residues) spans 23–33; it reads EITRSTPEKSL. Over residues 37 to 47 the composition is skewed to basic residues; it reads LPKKGGRNVHG. A compositionally biased stretch (polar residues) spans 258 to 268; the sequence is RNPNRYSNNMI. Positions 270–280 are enriched in basic residues; the sequence is QRRRTNKSKKR.

This sequence belongs to the universal ribosomal protein uL2 family. Part of the 50S ribosomal subunit. Forms a bridge to the 30S subunit in the 70S ribosome.

In terms of biological role, one of the primary rRNA binding proteins. Required for association of the 30S and 50S subunits to form the 70S ribosome, for tRNA binding and peptide bond formation. It has been suggested to have peptidyltransferase activity; this is somewhat controversial. Makes several contacts with the 16S rRNA in the 70S ribosome. The chain is Large ribosomal subunit protein uL2 from Corynebacterium diphtheriae (strain ATCC 700971 / NCTC 13129 / Biotype gravis).